The chain runs to 455 residues: Ribosomal protein uS12 methylthiotransferase RimO (455 aa).

One can recognise an MTTase N-terminal domain in the interval 30–140 (PTIGMVSLGC…VLDAVHGAVP (111 aa)). Residues Cys39, Cys75, Cys104, Cys171, Cys175, and Cys178 each coordinate [4Fe-4S] cluster. In terms of domain architecture, Radical SAM core spans 157 to 386 (LTPRHFSYLK…MEKAQAISEV (230 aa)). The 67-residue stretch at 389–455 (AAKVGRRIEV…GEYDIWGRPV (67 aa)) folds into the TRAM domain.

Belongs to the methylthiotransferase family. RimO subfamily. [4Fe-4S] cluster serves as cofactor.

It localises to the cytoplasm. It catalyses the reaction L-aspartate(89)-[ribosomal protein uS12]-hydrogen + (sulfur carrier)-SH + AH2 + 2 S-adenosyl-L-methionine = 3-methylsulfanyl-L-aspartate(89)-[ribosomal protein uS12]-hydrogen + (sulfur carrier)-H + 5'-deoxyadenosine + L-methionine + A + S-adenosyl-L-homocysteine + 2 H(+). In terms of biological role, catalyzes the methylthiolation of an aspartic acid residue of ribosomal protein uS12. The protein is Ribosomal protein uS12 methylthiotransferase RimO of Cereibacter sphaeroides (strain ATCC 17023 / DSM 158 / JCM 6121 / CCUG 31486 / LMG 2827 / NBRC 12203 / NCIMB 8253 / ATH 2.4.1.) (Rhodobacter sphaeroides).